The sequence spans 110 residues: Eukaryotic translation initiation factor eIF1 (110 aa).

The protein belongs to the SUI1 family.

Probably involved in translation. The polypeptide is Eukaryotic translation initiation factor eIF1 (Anopheles gambiae (African malaria mosquito)).